We begin with the raw amino-acid sequence, 359 residues long: 4-hydroxy-3-methylbut-2-en-1-yl diphosphate synthase (flavodoxin) (359 aa).

[4Fe-4S] cluster contacts are provided by Cys-264, Cys-267, Cys-299, and Glu-306.

The protein belongs to the IspG family. The cofactor is [4Fe-4S] cluster.

It carries out the reaction (2E)-4-hydroxy-3-methylbut-2-enyl diphosphate + oxidized [flavodoxin] + H2O + 2 H(+) = 2-C-methyl-D-erythritol 2,4-cyclic diphosphate + reduced [flavodoxin]. Its pathway is isoprenoid biosynthesis; isopentenyl diphosphate biosynthesis via DXP pathway; isopentenyl diphosphate from 1-deoxy-D-xylulose 5-phosphate: step 5/6. Functionally, converts 2C-methyl-D-erythritol 2,4-cyclodiphosphate (ME-2,4cPP) into 1-hydroxy-2-methyl-2-(E)-butenyl 4-diphosphate. The protein is 4-hydroxy-3-methylbut-2-en-1-yl diphosphate synthase (flavodoxin) of Mycoplasmoides gallisepticum (strain R(low / passage 15 / clone 2)) (Mycoplasma gallisepticum).